A 156-amino-acid chain; its full sequence is Ribosome-binding factor A (156 aa).

The disordered stretch occupies residues 129 to 156; the sequence is AGEAQPYRVEEEPGDSEDETPPSSQDQR.

It belongs to the RbfA family. Monomer. Binds 30S ribosomal subunits, but not 50S ribosomal subunits or 70S ribosomes.

It localises to the cytoplasm. One of several proteins that assist in the late maturation steps of the functional core of the 30S ribosomal subunit. Associates with free 30S ribosomal subunits (but not with 30S subunits that are part of 70S ribosomes or polysomes). Required for efficient processing of 16S rRNA. May interact with the 5'-terminal helix region of 16S rRNA. The protein is Ribosome-binding factor A of Salinispora arenicola (strain CNS-205).